The chain runs to 127 residues: Small ribosomal subunit protein uS13 (127 aa).

The interval 93–127 (RRGMPVRGQRTRTNARTRRGRRGQAIGIKKKATKK) is disordered.

It belongs to the universal ribosomal protein uS13 family. As to quaternary structure, part of the 30S ribosomal subunit. Forms a loose heterodimer with protein S19. Forms two bridges to the 50S subunit in the 70S ribosome.

Functionally, located at the top of the head of the 30S subunit, it contacts several helices of the 16S rRNA. In the 70S ribosome it contacts the 23S rRNA (bridge B1a) and protein L5 of the 50S subunit (bridge B1b), connecting the 2 subunits; these bridges are implicated in subunit movement. Contacts the tRNAs in the A and P-sites. The protein is Small ribosomal subunit protein uS13 of Chloroflexus aurantiacus (strain ATCC 29366 / DSM 635 / J-10-fl).